A 266-amino-acid chain; its full sequence is Diphthine synthase (266 aa).

S-adenosyl-L-methionine-binding positions include L9, D85, I88, 113–114 (TA), L168, A210, and H235.

This sequence belongs to the diphthine synthase family. Homodimer.

It carries out the reaction 2-[(3S)-amino-3-carboxypropyl]-L-histidyl-[translation elongation factor 2] + 3 S-adenosyl-L-methionine = diphthine-[translation elongation factor 2] + 3 S-adenosyl-L-homocysteine + 3 H(+). The protein operates within protein modification; peptidyl-diphthamide biosynthesis. In terms of biological role, S-adenosyl-L-methionine-dependent methyltransferase that catalyzes the trimethylation of the amino group of the modified target histidine residue in translation elongation factor 2 (EF-2), to form an intermediate called diphthine. The three successive methylation reactions represent the second step of diphthamide biosynthesis. This chain is Diphthine synthase, found in Natronomonas pharaonis (strain ATCC 35678 / DSM 2160 / CIP 103997 / JCM 8858 / NBRC 14720 / NCIMB 2260 / Gabara) (Halobacterium pharaonis).